We begin with the raw amino-acid sequence, 147 residues long: Lectin-like protein BA14k (147 aa).

An N-terminal signal peptide occupies residues 1-26; it reads MNSFRKTCAGALALIFGATSIVPTVA. A helical membrane pass occupies residues 80–100; that stretch reads GWWYPLAAFGAGAIIGGAISQ.

The protein belongs to the BA14k family.

It is found in the cell membrane. Has immunoglobulin-binding and hemagglutination properties, and can bind to mannose. Essential for virulence. May be involved in LPS biosynthesis or polysaccharide transport. In Brucella abortus (strain S19), this protein is Lectin-like protein BA14k.